The chain runs to 362 residues: Peptide chain release factor 1 (362 aa).

Gln-236 is subject to N5-methylglutamine.

Belongs to the prokaryotic/mitochondrial release factor family. Methylated by PrmC. Methylation increases the termination efficiency of RF1.

It localises to the cytoplasm. Its function is as follows. Peptide chain release factor 1 directs the termination of translation in response to the peptide chain termination codons UAG and UAA. The chain is Peptide chain release factor 1 from Lactobacillus johnsonii (strain CNCM I-12250 / La1 / NCC 533).